A 435-amino-acid polypeptide reads, in one-letter code: Adenylosuccinate synthetase (435 aa).

GTP is bound by residues 11–17 (GDEGKGK) and 39–41 (GHT). Aspartate 12 acts as the Proton acceptor in catalysis. The Mg(2+) site is built by aspartate 12 and glycine 39. IMP-binding positions include 12–15 (DEGK), 37–40 (NAGH), threonine 128, arginine 142, glutamine 223, threonine 238, and arginine 302. Histidine 40 acts as the Proton donor in catalysis. 298–304 (SVTGRPR) contacts substrate. GTP contacts are provided by residues arginine 304, 330–332 (KLD), and 412–414 (STG).

It belongs to the adenylosuccinate synthetase family. In terms of assembly, homodimer. Requires Mg(2+) as cofactor.

The protein localises to the cytoplasm. The enzyme catalyses IMP + L-aspartate + GTP = N(6)-(1,2-dicarboxyethyl)-AMP + GDP + phosphate + 2 H(+). It functions in the pathway purine metabolism; AMP biosynthesis via de novo pathway; AMP from IMP: step 1/2. Functionally, plays an important role in the de novo pathway of purine nucleotide biosynthesis. Catalyzes the first committed step in the biosynthesis of AMP from IMP. The sequence is that of Adenylosuccinate synthetase from Coxiella burnetii (strain Dugway 5J108-111).